The following is a 227-amino-acid chain: Cytochrome c oxidase subunit 2 (227 aa).

The Mitochondrial intermembrane segment spans residues M1 to S14. Residues P15–M45 traverse the membrane as a helical segment. Residues L46–Q59 lie on the Mitochondrial matrix side of the membrane. A helical transmembrane segment spans residues E60–M87. The Mitochondrial intermembrane segment spans residues D88–L227. 6 residues coordinate Cu cation: H161, C196, E198, C200, H204, and M207. Residue E198 participates in Mg(2+) binding. The residue at position 218 (Y218) is a Phosphotyrosine.

The protein belongs to the cytochrome c oxidase subunit 2 family. Component of the cytochrome c oxidase (complex IV, CIV), a multisubunit enzyme composed of 14 subunits. The complex is composed of a catalytic core of 3 subunits MT-CO1, MT-CO2 and MT-CO3, encoded in the mitochondrial DNA, and 11 supernumerary subunits COX4I, COX5A, COX5B, COX6A, COX6B, COX6C, COX7A, COX7B, COX7C, COX8 and NDUFA4, which are encoded in the nuclear genome. The complex exists as a monomer or a dimer and forms supercomplexes (SCs) in the inner mitochondrial membrane with NADH-ubiquinone oxidoreductase (complex I, CI) and ubiquinol-cytochrome c oxidoreductase (cytochrome b-c1 complex, complex III, CIII), resulting in different assemblies (supercomplex SCI(1)III(2)IV(1) and megacomplex MCI(2)III(2)IV(2)). Found in a complex with TMEM177, COA6, COX18, COX20, SCO1 and SCO2. Interacts with TMEM177 in a COX20-dependent manner. Interacts with COX20. Interacts with COX16. Requires Cu cation as cofactor.

The protein localises to the mitochondrion inner membrane. It catalyses the reaction 4 Fe(II)-[cytochrome c] + O2 + 8 H(+)(in) = 4 Fe(III)-[cytochrome c] + 2 H2O + 4 H(+)(out). Functionally, component of the cytochrome c oxidase, the last enzyme in the mitochondrial electron transport chain which drives oxidative phosphorylation. The respiratory chain contains 3 multisubunit complexes succinate dehydrogenase (complex II, CII), ubiquinol-cytochrome c oxidoreductase (cytochrome b-c1 complex, complex III, CIII) and cytochrome c oxidase (complex IV, CIV), that cooperate to transfer electrons derived from NADH and succinate to molecular oxygen, creating an electrochemical gradient over the inner membrane that drives transmembrane transport and the ATP synthase. Cytochrome c oxidase is the component of the respiratory chain that catalyzes the reduction of oxygen to water. Electrons originating from reduced cytochrome c in the intermembrane space (IMS) are transferred via the dinuclear copper A center (CU(A)) of subunit 2 and heme A of subunit 1 to the active site in subunit 1, a binuclear center (BNC) formed by heme A3 and copper B (CU(B)). The BNC reduces molecular oxygen to 2 water molecules using 4 electrons from cytochrome c in the IMS and 4 protons from the mitochondrial matrix. In Syncerus caffer (African buffalo), this protein is Cytochrome c oxidase subunit 2 (MT-CO2).